The sequence spans 595 residues: Sulfite reductase [NADPH] flavoprotein alpha-component (595 aa).

Positions 59 to 197 (ITVLSASQTG…KADIWRREIV (139 aa)) constitute a Flavodoxin-like domain. Residues 65–70 (SQTGNA), 112–115 (STQG), and 148–157 (LGDSSYTYFA) each bind FMN. The FAD-binding FR-type domain occupies 230–444 (EEPFTAHLVV…IEHNDNFRLP (215 aa)). FAD-binding positions include threonine 318, phenylalanine 352, 382–385 (RLYS), 400–402 (TVS), tyrosine 406, and 415–418 (GGAS). NADP(+) contacts are provided by residues 515-516 (SQ), 521-525 (KIYVQ), and aspartate 557. Tyrosine 595 provides a ligand contact to FAD.

This sequence belongs to the NADPH-dependent sulphite reductase flavoprotein subunit CysJ family. The protein in the N-terminal section; belongs to the flavodoxin family. In the C-terminal section; belongs to the flavoprotein pyridine nucleotide cytochrome reductase family. In terms of assembly, alpha(8)-beta(8). The alpha component is a flavoprotein, the beta component is a hemoprotein. Requires FAD as cofactor. FMN is required as a cofactor.

It carries out the reaction hydrogen sulfide + 3 NADP(+) + 3 H2O = sulfite + 3 NADPH + 4 H(+). It functions in the pathway sulfur metabolism; hydrogen sulfide biosynthesis; hydrogen sulfide from sulfite (NADPH route): step 1/1. Component of the sulfite reductase complex that catalyzes the 6-electron reduction of sulfite to sulfide. This is one of several activities required for the biosynthesis of L-cysteine from sulfate. The flavoprotein component catalyzes the electron flow from NADPH -&gt; FAD -&gt; FMN to the hemoprotein component. The protein is Sulfite reductase [NADPH] flavoprotein alpha-component of Baumannia cicadellinicola subsp. Homalodisca coagulata.